Here is a 311-residue protein sequence, read N- to C-terminus: 4-diphosphocytidyl-2-C-methyl-D-erythritol kinase (311 aa).

Lys-16 is a catalytic residue. Residue 101-111 participates in ATP binding; it reads PVAGGMAGGSA. Asp-143 is an active-site residue.

Belongs to the GHMP kinase family. IspE subfamily.

The enzyme catalyses 4-CDP-2-C-methyl-D-erythritol + ATP = 4-CDP-2-C-methyl-D-erythritol 2-phosphate + ADP + H(+). It functions in the pathway isoprenoid biosynthesis; isopentenyl diphosphate biosynthesis via DXP pathway; isopentenyl diphosphate from 1-deoxy-D-xylulose 5-phosphate: step 3/6. Catalyzes the phosphorylation of the position 2 hydroxy group of 4-diphosphocytidyl-2C-methyl-D-erythritol. The sequence is that of 4-diphosphocytidyl-2-C-methyl-D-erythritol kinase from Rhodococcus jostii (strain RHA1).